The chain runs to 264 residues: Ion-translocating oxidoreductase complex subunit B (264 aa).

Residues 5–25 (LINSIAVLAGLGFAVGVMLVI) form a helical membrane-spanning segment. In terms of domain architecture, 4Fe-4S spans 33-92 (DSNPLIDDVASLLPGANCGGCGFAGCAACAEAIVEQGAPVNSCPVGGFEVAKQIGALLGQ). [4Fe-4S] cluster contacts are provided by Cys-50, Cys-53, Cys-58, Cys-75, Cys-138, Cys-142, Cys-148, Cys-152, Cys-172, Cys-175, Cys-178, Cys-182, Cys-217, Cys-220, Cys-223, Cys-227, Cys-246, Cys-249, Cys-252, and Cys-256. 4Fe-4S ferredoxin-type domains lie at 127 to 162 (VALMLCDSRKGCTYGCLGLGTCVQACQFGALSMGED), 163 to 192 (GFPVVNKALCTSCGNCIAACPNGVLTFARD), 207 to 236 (KDVKAVCEVGCIGCKKCEKECPAGAIRVTE), and 237 to 264 (FLAEIDQEKCTACGACVAICPQKAIELR).

The protein belongs to the 4Fe4S bacterial-type ferredoxin family. RnfB subfamily. As to quaternary structure, the Rnf complex is probably composed of eight subunits, including RnfA, RnfB, RnfC, RnfD, RnfE and RnfG. Requires [4Fe-4S] cluster as cofactor.

The protein localises to the cell membrane. Its function is as follows. Part of a membrane-bound complex that couples electron transfer with translocation of ions across the membrane. Catalyzes Na(+) transport, most probably coupled to electron transfer from reduced ferredoxin to methanophenazine and heterodisulfide reductase. Involved in heterodisulfide reduction during methanogenesis from acetate. This Methanosarcina acetivorans (strain ATCC 35395 / DSM 2834 / JCM 12185 / C2A) protein is Ion-translocating oxidoreductase complex subunit B.